The chain runs to 336 residues: Phosphate acyltransferase (336 aa).

It belongs to the PlsX family. In terms of assembly, homodimer. Probably interacts with PlsY.

Its subcellular location is the cytoplasm. It catalyses the reaction a fatty acyl-[ACP] + phosphate = an acyl phosphate + holo-[ACP]. Its pathway is lipid metabolism; phospholipid metabolism. In terms of biological role, catalyzes the reversible formation of acyl-phosphate (acyl-PO(4)) from acyl-[acyl-carrier-protein] (acyl-ACP). This enzyme utilizes acyl-ACP as fatty acyl donor, but not acyl-CoA. In Pseudomonas putida (strain GB-1), this protein is Phosphate acyltransferase.